The chain runs to 959 residues: Ataxin-2 homolog (959 aa).

Residues 13–92 (DVLSAINDMI…IVDFAYVTQE (80 aa)) form the Sm domain. Disordered regions lie at residues 203 to 378 (AREI…GSRV), 392 to 484 (TAPK…SVIT), 501 to 528 (PRVAPATPTATTPVQNEYHPQQQPHPAM), 697 to 831 (PPQG…QHIQ), and 867 to 959 (PMQQ…QSPP). A compositionally biased stretch (basic and acidic residues) spans 226 to 235 (DLDKITRQED). Positions 246-260 (NNSFNQQQQQRRNPN) are enriched in low complexity. Residues 270–281 (RRAEGLRGDRRN) are compositionally biased toward basic and acidic residues. Low complexity predominate over residues 282–313 (SGSSSANNSRYGAPAAAQQNYSQNQQQQQGQK). Polar residues-rich tracts occupy residues 341-356 (RQQQKQMLDPRPNNNV) and 473-484 (VSVTSENDSVIT). Composition is skewed to low complexity over residues 504 to 528 (APATPTATTPVQNEYHPQQQPHPAM), 697 to 707 (PPQGQQQQPRY), and 715 to 725 (QQQQQQPQQQQ). Polar residues-rich tracts occupy residues 726–742 (FSGEQSRPQSHPNSQPT) and 756–765 (APQNGNMQAE). Low complexity predominate over residues 766–788 (SSSNASHSGSTSSQSGQRSGSPP). Residues 789–798 (GAVPPPPPPQ) are compositionally biased toward pro residues. Composition is skewed to low complexity over residues 822–831 (MMQQQQQHIQ), 867–876 (PMQQNQHPQQ), and 902–911 (QQQQQQQQQQ). Over residues 912–922 (MHRQNSLPQQF) the composition is skewed to polar residues. Residues 923-935 (QGNQGVNPSGQQS) are compositionally biased toward low complexity. A compositionally biased stretch (polar residues) spans 948–959 (TPRDQQHSQSPP).

The protein belongs to the ataxin-2 family. Interacts (via C-terminus) with szy-20 (via C-terminus); the interaction is RNA independent. Interacts with pab-1. Interacts with gdi-1. As to expression, expressed in the central nervous system, dorsal and ventral nerve cord, intestinal lining and body-wall muscle. Expressed in the gonad.

The protein localises to the cytoplasm. It is found in the nucleus. Its function is as follows. Probable RNA-binding protein that negatively regulates the translation of targets. Functions with RNA-binding protein szy-20 to ensure embryonic cell division, and to this end, plays a role in the regulation of centrosome assembly, position and size, and in astral microtubule outgrowth and nucleation. Required for gonad development, germ cell proliferation and for the production of oocytes. Regulates whole body growth and fat accumulation in response to food availability, and this may be through the mTOR pathway, upstream of daf-15 and rheb-1. The sequence is that of Ataxin-2 homolog from Caenorhabditis elegans.